Here is a 309-residue protein sequence, read N- to C-terminus: Probable manganese-dependent inorganic pyrophosphatase (309 aa).

Mn(2+) contacts are provided by His9, Asp13, Asp15, Asp75, His97, and Asp149.

The protein belongs to the PPase class C family. Requires Mn(2+) as cofactor.

The protein localises to the cytoplasm. It catalyses the reaction diphosphate + H2O = 2 phosphate + H(+). This is Probable manganese-dependent inorganic pyrophosphatase from Staphylococcus saprophyticus subsp. saprophyticus (strain ATCC 15305 / DSM 20229 / NCIMB 8711 / NCTC 7292 / S-41).